Reading from the N-terminus, the 141-residue chain is Nucleoside diphosphate kinase (141 aa).

Positions 11, 59, 87, 93, 104, and 114 each coordinate ATP. The active-site Pros-phosphohistidine intermediate is H117.

The protein belongs to the NDK family. As to quaternary structure, homotetramer. It depends on Mg(2+) as a cofactor.

The protein localises to the cytoplasm. The catalysed reaction is a 2'-deoxyribonucleoside 5'-diphosphate + ATP = a 2'-deoxyribonucleoside 5'-triphosphate + ADP. The enzyme catalyses a ribonucleoside 5'-diphosphate + ATP = a ribonucleoside 5'-triphosphate + ADP. Major role in the synthesis of nucleoside triphosphates other than ATP. The ATP gamma phosphate is transferred to the NDP beta phosphate via a ping-pong mechanism, using a phosphorylated active-site intermediate. The polypeptide is Nucleoside diphosphate kinase (Azoarcus sp. (strain BH72)).